The primary structure comprises 371 residues: uncharacterized protein (371 aa).

Residues 43-148 enclose the EH domain; it reads DESRVPKFYL…VQAFPTASNP (106 aa). The segment at 179-205 is disordered; the sequence is SMRKKKESDSKEVSAHNSPAKGAAHDL.

This is an uncharacterized protein from Caenorhabditis elegans.